A 947-amino-acid chain; its full sequence is Microtubule cross-linking factor 3 (947 aa).

The N-terminal stretch at 1–21 (MSQPPIGGAAPATAAASPAAA) is a signal peptide. 3 disordered regions span residues 1–251 (MSQP…SYWK), 266–368 (KERA…TLKN), and 496–524 (LSLK…DNED). Composition is skewed to low complexity over residues 9-24 (AAPA…AATE), 72-81 (QQQLQQQQQQ), and 109-137 (APKG…ALGG). A compositionally biased stretch (basic and acidic residues) spans 141-151 (GPPEEPPRELE). Positions 164–180 (GEGGGGGGEGGGAGGGS) are enriched in gly residues. Positions 214–236 (ASPSPSSSSAGKTPGTGSRNSGS) are enriched in low complexity. A compositionally biased stretch (gly residues) spans 237 to 248 (GVAGGGSGGGGS). 2 stretches are compositionally biased toward low complexity: residues 287–297 (SSRSSPVSGPP) and 304–325 (AVAS…AEGS). The stretch at 342-726 (HPQQLQEQEE…GKVMQLQYEN (385 aa)) forms a coiled coil. 2 stretches are compositionally biased toward basic and acidic residues: residues 355–368 (EMEK…TLKN) and 496–513 (LSLK…EKKA). S569 is subject to Phosphoserine. Positions 743–786 (GIRGSPRDSDAESDAGKKESDDDSRPPHRKREGPIGGESDSEEV) are disordered. Basic and acidic residues predominate over residues 747-768 (SPRDSDAESDAGKKESDDDSRP). S781 carries the phosphoserine modification. Residues 811–835 (DRQQMKDIRSEAERLGKTIDRLIAD) are a coiled coil. The helical transmembrane segment at 915–935 (PIILLILILVLFSSLSYTTIF) threads the bilayer.

It belongs to the MTCL family.

It localises to the membrane. The polypeptide is Microtubule cross-linking factor 3 (Homo sapiens (Human)).